A 73-amino-acid polypeptide reads, in one-letter code: Large ribosomal subunit protein bL32c (73 aa).

It belongs to the bacterial ribosomal protein bL32 family.

It localises to the plastid. Its subcellular location is the chloroplast. This Jasminum nudiflorum (Winter jasmine) protein is Large ribosomal subunit protein bL32c.